We begin with the raw amino-acid sequence, 117 residues long: uncharacterized protein (117 aa).

This is an uncharacterized protein from Rattus norvegicus (Rat).